The chain runs to 917 residues: Isoleucine--tRNA ligase (917 aa).

Positions 57–67 (PYANGNLHMGH) match the 'HIGH' region motif. Residue glutamate 554 coordinates L-isoleucyl-5'-AMP. The 'KMSKS' region motif lies at 595–599 (KMSKS). Position 598 (lysine 598) interacts with ATP. Zn(2+) contacts are provided by cysteine 886, cysteine 889, cysteine 906, and cysteine 909.

Belongs to the class-I aminoacyl-tRNA synthetase family. IleS type 1 subfamily. In terms of assembly, monomer. It depends on Zn(2+) as a cofactor.

The protein resides in the cytoplasm. The catalysed reaction is tRNA(Ile) + L-isoleucine + ATP = L-isoleucyl-tRNA(Ile) + AMP + diphosphate. Functionally, catalyzes the attachment of isoleucine to tRNA(Ile). As IleRS can inadvertently accommodate and process structurally similar amino acids such as valine, to avoid such errors it has two additional distinct tRNA(Ile)-dependent editing activities. One activity is designated as 'pretransfer' editing and involves the hydrolysis of activated Val-AMP. The other activity is designated 'posttransfer' editing and involves deacylation of mischarged Val-tRNA(Ile). In Staphylococcus aureus (strain MSSA476), this protein is Isoleucine--tRNA ligase (ileS).